The following is a 274-amino-acid chain: Single-stranded DNA-binding protein WHY1, chloroplastic (274 aa).

The N-terminal 54 residues, Met1 to Lys54, are a transit peptide targeting the chloroplast. Residues Lys100–Leu105 form a required for ssDNA binding region. The short motif at Lys178 to Lys191 is the Nuclear localization signal element. Residues Pro253–Arg274 form a disordered region.

This sequence belongs to the Whirly family. Homotetramer.

It is found in the nucleus. It localises to the plastid. The protein localises to the chloroplast. Its function is as follows. Single-stranded DNA-binding protein that acts as a transcriptional activator of the pathogenesis-related gene PR-10a. Upon elicitation, binds a 30bp promoter sequence known as elicitor element response (ERE) and is required for PR-10a expression. This Solanum tuberosum (Potato) protein is Single-stranded DNA-binding protein WHY1, chloroplastic (WHY1).